The chain runs to 430 residues: 3-phosphoshikimate 1-carboxyvinyltransferase (430 aa).

The 3-phosphoshikimate site is built by lysine 20, serine 21, and arginine 25. Lysine 20 provides a ligand contact to phosphoenolpyruvate. Phosphoenolpyruvate-binding residues include glycine 92 and arginine 120. Positions 166, 168, 312, and 339 each coordinate 3-phosphoshikimate. Glutamine 168 lines the phosphoenolpyruvate pocket. The active-site Proton acceptor is aspartate 312. The phosphoenolpyruvate site is built by arginine 343 and arginine 387.

The protein belongs to the EPSP synthase family. In terms of assembly, monomer.

The protein localises to the cytoplasm. It carries out the reaction 3-phosphoshikimate + phosphoenolpyruvate = 5-O-(1-carboxyvinyl)-3-phosphoshikimate + phosphate. Its pathway is metabolic intermediate biosynthesis; chorismate biosynthesis; chorismate from D-erythrose 4-phosphate and phosphoenolpyruvate: step 6/7. Catalyzes the transfer of the enolpyruvyl moiety of phosphoenolpyruvate (PEP) to the 5-hydroxyl of shikimate-3-phosphate (S3P) to produce enolpyruvyl shikimate-3-phosphate and inorganic phosphate. In Lactococcus lactis subsp. cremoris (strain MG1363), this protein is 3-phosphoshikimate 1-carboxyvinyltransferase.